Reading from the N-terminus, the 315-residue chain is Probable cytochrome c oxidase subunit 2 (315 aa).

Residues 6–53 form the RPE1 insert domain; it reads RHLSKPAYREEFKGDTSPRTAAYISNRADASLGSTYKLPLEAKFWKMS. 3 helical membrane-spanning segments follow: residues 41-61, 96-116, and 133-153; these read YKLP…CFLI, LLYI…FVCI, and VLIE…IAVP. Histidine 235, cysteine 270, cysteine 274, and histidine 278 together coordinate Cu cation.

The protein belongs to the cytochrome c oxidase subunit 2 family. Cu cation is required as a cofactor. Heme serves as cofactor.

It is found in the cell membrane. The catalysed reaction is 4 Fe(II)-[cytochrome c] + O2 + 8 H(+)(in) = 4 Fe(III)-[cytochrome c] + 2 H2O + 4 H(+)(out). Its function is as follows. Subunits I and II form the functional core of the enzyme complex. Electrons originating in cytochrome c are transferred via heme a and Cu(A) to the binuclear center formed by heme a3 and Cu(B). The chain is Probable cytochrome c oxidase subunit 2 (ctaC) from Rickettsia felis (strain ATCC VR-1525 / URRWXCal2) (Rickettsia azadi).